The primary structure comprises 513 residues: Na(+)/H(+) antiporter NhaB (513 aa).

A run of 12 helical transmembrane segments spans residues Leu-23 to Ala-43, Ile-52 to Ile-72, Leu-97 to Phe-117, Leu-120 to Phe-140, Phe-144 to Ile-164, Leu-202 to Pro-222, Phe-238 to Leu-258, Ala-303 to Ile-323, Thr-348 to Ile-368, Leu-391 to Ile-411, Ala-447 to Ile-467, and Val-475 to Phe-495.

This sequence belongs to the NhaB Na(+)/H(+) (TC 2.A.34) antiporter family.

It localises to the cell inner membrane. The enzyme catalyses 2 Na(+)(in) + 3 H(+)(out) = 2 Na(+)(out) + 3 H(+)(in). Na(+)/H(+) antiporter that extrudes sodium in exchange for external protons. This is Na(+)/H(+) antiporter NhaB from Shigella sonnei (strain Ss046).